The following is a 193-amino-acid chain: 3-isopropylmalate dehydratase small subunit (193 aa).

The protein belongs to the LeuD family. LeuD type 1 subfamily. In terms of assembly, heterodimer of LeuC and LeuD.

It carries out the reaction (2R,3S)-3-isopropylmalate = (2S)-2-isopropylmalate. It functions in the pathway amino-acid biosynthesis; L-leucine biosynthesis; L-leucine from 3-methyl-2-oxobutanoate: step 2/4. Catalyzes the isomerization between 2-isopropylmalate and 3-isopropylmalate, via the formation of 2-isopropylmaleate. This chain is 3-isopropylmalate dehydratase small subunit, found in Listeria innocua serovar 6a (strain ATCC BAA-680 / CLIP 11262).